The chain runs to 243 residues: Leucyl/phenylalanyl-tRNA--protein transferase (243 aa).

Belongs to the L/F-transferase family.

It localises to the cytoplasm. It catalyses the reaction N-terminal L-lysyl-[protein] + L-leucyl-tRNA(Leu) = N-terminal L-leucyl-L-lysyl-[protein] + tRNA(Leu) + H(+). The catalysed reaction is N-terminal L-arginyl-[protein] + L-leucyl-tRNA(Leu) = N-terminal L-leucyl-L-arginyl-[protein] + tRNA(Leu) + H(+). The enzyme catalyses L-phenylalanyl-tRNA(Phe) + an N-terminal L-alpha-aminoacyl-[protein] = an N-terminal L-phenylalanyl-L-alpha-aminoacyl-[protein] + tRNA(Phe). Functions in the N-end rule pathway of protein degradation where it conjugates Leu, Phe and, less efficiently, Met from aminoacyl-tRNAs to the N-termini of proteins containing an N-terminal arginine or lysine. The protein is Leucyl/phenylalanyl-tRNA--protein transferase of Xylella fastidiosa (strain 9a5c).